The primary structure comprises 192 residues: Xanthine phosphoribosyltransferase (192 aa).

2 residues coordinate xanthine: L20 and N27. Residue 128–132 participates in 5-phospho-alpha-D-ribose 1-diphosphate binding; the sequence is ANGDA. K156 serves as a coordination point for xanthine.

The protein belongs to the purine/pyrimidine phosphoribosyltransferase family. Xpt subfamily. In terms of assembly, homodimer.

It is found in the cytoplasm. The enzyme catalyses XMP + diphosphate = xanthine + 5-phospho-alpha-D-ribose 1-diphosphate. Its pathway is purine metabolism; XMP biosynthesis via salvage pathway; XMP from xanthine: step 1/1. Converts the preformed base xanthine, a product of nucleic acid breakdown, to xanthosine 5'-monophosphate (XMP), so it can be reused for RNA or DNA synthesis. In Staphylococcus aureus (strain MRSA252), this protein is Xanthine phosphoribosyltransferase.